Reading from the N-terminus, the 510-residue chain is Flavonoid 3',5'-hydroxylase (510 aa).

Cysteine 447 is a heme binding site.

The protein belongs to the cytochrome P450 family. The cofactor is heme.

It catalyses the reaction a 3',5'-unsubstituted flavanone + 2 reduced [NADPH--hemoprotein reductase] + 2 O2 = a 3',5'-dihydroxyflavanone + 2 oxidized [NADPH--hemoprotein reductase] + 2 H2O + 2 H(+). The protein operates within pigment biosynthesis; anthocyanin biosynthesis. In terms of biological role, catalyzes the 3'5'-hydroxylation of naringenin and eriodictyol to form 5,7,3,'4',5'-pentahydroxyflavanone and 3',5'-hydroxylation of dihydrokaempferol and dihydroquercetin to form dihydromyricetin. This Eustoma exaltatum subsp. russellianum (Bluebells) protein is Flavonoid 3',5'-hydroxylase (CYP75A5).